The primary structure comprises 122 residues: Small ribosomal subunit protein bS6 (122 aa).

The tract at residues 97–122 is disordered; sequence TAPSPMMKAVQKEDAAKSHRAEAPAA. The span at 106-122 shows a compositional bias: basic and acidic residues; that stretch reads VQKEDAAKSHRAEAPAA.

This sequence belongs to the bacterial ribosomal protein bS6 family.

In terms of biological role, binds together with bS18 to 16S ribosomal RNA. This chain is Small ribosomal subunit protein bS6, found in Janthinobacterium sp. (strain Marseille) (Minibacterium massiliensis).